The primary structure comprises 461 residues: MAIVAQGVSTILTTFQKTFKGLLPLIILVAYTLLGAWIFWMIEGENEREMLIEQQKERDELIRRTVYKINQLQIKRQRRLMTAEEEYNRTAKVLTTFQETLGIVPADMDKDIHWTFLGSIFYCMTVYTTIGYGNIVPGTGWGRFATILYAFIGIPLTVLSLYCLGSLFAKGCKMLWRFFLKSTRVVSKDLSNKISEAADNIEEGTTAITPSAEKTENNDDDLLSFPISGLLLITVIWVIFCAVLFTFLEEWDFGTSLYFTLISFTTIGFGDILPSDYDFMPIVGVLLLIGLSLVSTVMTLIQQQIEALASGMKDNIDQEYARALNEAREDGEVDEHVDPEEDPENNKKSFDAVISRMNWSKRGLYYLLPDSQKKELAKQSEKKMGRKSIKIQTDNDLLETLIREEILKAELNNEMHKYTAPRSSHQPKLVYSDVREKEVPIEVVRVEHFNHGNEDYLEHDI.

Over 1 to 21 (MAIVAQGVSTILTTFQKTFKG) the chain is Cytoplasmic. The helical transmembrane segment at 22-42 (LLPLIILVAYTLLGAWIFWMI) threads the bilayer. N-linked (GlcNAc...) asparagine glycosylation occurs at N88. The pore-forming intramembrane region spans 116 to 136 (FLGSIFYCMTVYTTIGYGNIV). Residues 144 to 164 (FATILYAFIGIPLTVLSLYCL) form a helical membrane-spanning segment. The Cytoplasmic segment spans residues 165–224 (GSLFAKGCKMLWRFFLKSTRVVSKDLSNKISEAADNIEEGTTAITPSAEKTENNDDDLLS). Residues 225–245 (FPISGLLLITVIWVIFCAVLF) form a helical membrane-spanning segment. Residues 253-273 (FGTSLYFTLISFTTIGFGDIL) constitute an intramembrane region (pore-forming). The chain crosses the membrane as a helical span at residues 281 to 301 (PIVGVLLLIGLSLVSTVMTLI). Residues 302–461 (QQQIEALASG…GNEDYLEHDI (160 aa)) are Cytoplasmic-facing. Positions 328-347 (REDGEVDEHVDPEEDPENNK) are disordered.

This sequence belongs to the two pore domain potassium channel (TC 1.A.1.8) family. In terms of tissue distribution, expressed in body wall muscle.

The protein localises to the membrane. Functionally, outwardly rectifying potassium channel protein; activity is sharply augmented by increase in temperature. This Caenorhabditis elegans protein is TWiK family of potassium channels protein 18 (twk-18).